Reading from the N-terminus, the 207-residue chain is Basic helix-loop-helix transcription factor scleraxis (207 aa).

2 disordered regions span residues 1-91 (MSFA…RDRT) and 151-183 (AFFH…QPKQ). Positions 73–91 (PGREPRQRHTANARERDRT) are enriched in basic and acidic residues. Residues 78–130 (RQRHTANARERDRTNSVNTAFTALRTLIPTEPADRKLSKIETLRLASSYISHL) enclose the bHLH domain. The span at 161–171 (PLPPPPPPPPL) shows a compositional bias: pro residues.

In terms of assembly, efficient DNA binding requires dimerization with another bHLH protein. Dimerizes and binds the E-box consensus sequence with E12. In terms of tissue distribution, expressed in mesenchymal precursors of cartilage and in connective tissue. Highly expressed in tendons in the limb, tongue and diaphragm and in cartilage of the bronchi.

It is found in the nucleus. Its function is as follows. Plays an early essential role in mesoderm formation, as well as a later role in formation of somite-derived chondrogenic lineages. This chain is Basic helix-loop-helix transcription factor scleraxis (Scx), found in Mus musculus (Mouse).